Consider the following 190-residue polypeptide: Imidazoleglycerol-phosphate dehydratase (190 aa).

The protein belongs to the imidazoleglycerol-phosphate dehydratase family.

The protein localises to the cytoplasm. It carries out the reaction D-erythro-1-(imidazol-4-yl)glycerol 3-phosphate = 3-(imidazol-4-yl)-2-oxopropyl phosphate + H2O. Its pathway is amino-acid biosynthesis; L-histidine biosynthesis; L-histidine from 5-phospho-alpha-D-ribose 1-diphosphate: step 6/9. In Sulfurimonas denitrificans (strain ATCC 33889 / DSM 1251) (Thiomicrospira denitrificans (strain ATCC 33889 / DSM 1251)), this protein is Imidazoleglycerol-phosphate dehydratase.